The following is a 232-amino-acid chain: Large ribosomal subunit protein uL1 (232 aa).

This sequence belongs to the universal ribosomal protein uL1 family. As to quaternary structure, part of the 50S ribosomal subunit.

In terms of biological role, binds directly to 23S rRNA. The L1 stalk is quite mobile in the ribosome, and is involved in E site tRNA release. Functionally, protein L1 is also a translational repressor protein, it controls the translation of the L11 operon by binding to its mRNA. The chain is Large ribosomal subunit protein uL1 from Bacillus velezensis (strain DSM 23117 / BGSC 10A6 / LMG 26770 / FZB42) (Bacillus amyloliquefaciens subsp. plantarum).